The chain runs to 222 residues: Cell division protein FtsQ (222 aa).

At 1–5 (MNKKV) the chain is on the cytoplasmic side. Residues 6–26 (IAIVVGVVVVLVAILGVVAWF) traverse the membrane as a helical segment. The Extracellular segment spans residues 27–222 (VPILKVGNIE…ISSPSMVTVR (196 aa)). Positions 30–98 (LKVGNIEVTG…STITVELTER (69 aa)) constitute a POTRA domain.

The protein belongs to the FtsQ/DivIB family. FtsQ subfamily.

The protein localises to the cell membrane. Functionally, essential cell division protein. The chain is Cell division protein FtsQ from Corynebacterium glutamicum (strain ATCC 13032 / DSM 20300 / JCM 1318 / BCRC 11384 / CCUG 27702 / LMG 3730 / NBRC 12168 / NCIMB 10025 / NRRL B-2784 / 534).